Reading from the N-terminus, the 507-residue chain is Ribose import ATP-binding protein RbsA 2 (507 aa).

ABC transporter domains follow at residues 7-245 (FSLD…VGRN) and 249-498 (LFTR…MPQS). 39 to 46 (GENGAGKS) lines the ATP pocket.

Belongs to the ABC transporter superfamily. Ribose importer (TC 3.A.1.2.1) family. The complex is composed of an ATP-binding protein (RbsA), two transmembrane proteins (RbsC) and a solute-binding protein (RbsB).

The protein localises to the cell inner membrane. The catalysed reaction is D-ribose(out) + ATP + H2O = D-ribose(in) + ADP + phosphate + H(+). Functionally, part of the ABC transporter complex RbsABC involved in ribose import. Responsible for energy coupling to the transport system. The chain is Ribose import ATP-binding protein RbsA 2 from Mesorhizobium japonicum (strain LMG 29417 / CECT 9101 / MAFF 303099) (Mesorhizobium loti (strain MAFF 303099)).